Consider the following 553-residue polypeptide: Putative polyamine transporter (553 aa).

Helical transmembrane passes span 43-63, 68-88, 133-153, 163-183, 190-210, 240-260, 280-300, 333-353, 397-417, 453-473, and 485-505; these read WSIF…AACF, LVVG…TSVA, ITAA…LHSF, AQIF…ACFP, FSSA…IMIL, WPTG…MSGY, AIVL…IAIA, VIGA…NCLL, LLLL…SIGA, IGWV…FPTV, and WTCL…VVYA.

The protein belongs to the amino acid-polyamine-organocation (APC) superfamily.

It localises to the membrane. In Candida albicans (Yeast), this protein is Putative polyamine transporter (GPT1).